The following is a 706-amino-acid chain: Drebrin (706 aa).

N-acetylalanine is present on A2. Residues 3-134 (GVSFSGHRLE…DAGAIGQRLS (132 aa)) enclose the ADF-H domain. S141 and S142 each carry phosphoserine. Positions 209-236 (ERMEQERQEQEERERRYREREQQIEEHR) are enriched in basic and acidic residues. Residues 209–497 (ERMEQERQEQ…AEPAASVTSV (289 aa)) form a disordered region. S241 is modified (phosphoserine). Residues 288–298 (DNPREFFRQQE) are compositionally biased toward basic and acidic residues. Over residues 331–345 (SDSGPSSSSSSSSSP) the composition is skewed to low complexity. At S344 the chain carries Phosphoserine. Residues 357–366 (RTPNLSSSLP) show a composition bias toward polar residues. A phosphothreonine mark is found at T379 and T383. Polar residues predominate over residues 382 to 396 (PTRSPSDSSTASTPI). Phosphoserine is present on residues S385, S387, and S393. T394 is modified (phosphothreonine). The span at 411–422 (QPPPPPPPPPPT) shows a compositional bias: pro residues. A compositionally biased stretch (low complexity) spans 453–497 (AAEPPQAQEPPLLQSSPLEDSMCTESPEQAALAAPAEPAASVTSV). The residue at position 468 (S468) is a Phosphoserine. The residue at position 550 (T550) is a Phosphothreonine. Residues 633–677 (EPHLLTNGETTQKEGTQASEGYFSQSQEEEFAQSEEPCAKVPPPV) are disordered. Residues 639–651 (NGETTQKEGTQAS) are compositionally biased toward polar residues. S658 is subject to Phosphoserine.

In terms of assembly, interacts with RUFY3. Interacts with CXCR4; this interaction is enhanced by antigenic stimulation. Interacts (via ADF-H domain) with ZMYND8 (via N-terminus); the interaction leads to sequestering of ZMYND8 in the cytoplasm. As to expression, expressed in the hippocampus, with expression in the pyramidal cells of CA1, CA2 and CA3 and in the granule cells of the dentate gyrus (at protein level). Highly expressed in brain, also present in stomach and to a lesser degree in kidney, colon, and urinary bladder. The E2 isoform is specifically expressed in adult stomach, kidney, and cultured cells.

Its subcellular location is the cytoplasm. It localises to the cell projection. The protein resides in the dendrite. The protein localises to the cell cortex. It is found in the cell junction. Its subcellular location is the growth cone. Actin cytoskeleton-organizing protein that plays a role in the formation of cell projections. Required for actin polymerization at immunological synapses (IS) and for the recruitment of the chemokine receptor CXCR4 to IS. Plays a role in dendritic spine morphogenesis and organization, including the localization of the dopamine receptor DRD1 to the dendritic spines. Involved in memory-related synaptic plasticity in the hippocampus. In Mus musculus (Mouse), this protein is Drebrin (Dbn1).